A 282-amino-acid chain; its full sequence is ESX-1 secretion-associated protein EspG1 (282 aa).

This sequence belongs to the EspG family. Interacts specifically with ESX-1-dependent PE/PPE proteins.

It localises to the cytoplasm. Part of the ESX-1 / type VII specialized secretion system (T7SS), which exports several proteins including EsxA and EsxB. Specific chaperone for cognate PE/PPE proteins, plays an important role in preventing aggregation of PE/PPE dimers. Also plays a role in DNA conjugation, in at least recipient strain. This chain is ESX-1 secretion-associated protein EspG1, found in Mycolicibacterium smegmatis (strain ATCC 700084 / mc(2)155) (Mycobacterium smegmatis).